The primary structure comprises 445 residues: GTPase Der (445 aa).

2 EngA-type G domains span residues 2-166 and 182-355; these read FRVA…PEYE and IKVA…NQAW. GTP-binding positions include 8–15, 55–59, 118–121, 188–195, 235–239, and 300–303; these read GIPNVGKS, DTGGY, NKID, GKPNAGKS, and DTAGM. One can recognise a KH-like domain in the interval 356–440; it reads KRVGTGQLNR…PIKLIFRGKE (85 aa).

The protein belongs to the TRAFAC class TrmE-Era-EngA-EngB-Septin-like GTPase superfamily. EngA (Der) GTPase family. As to quaternary structure, associates with the 50S ribosomal subunit.

Functionally, GTPase that plays an essential role in the late steps of ribosome biogenesis. This is GTPase Der from Sulfurihydrogenibium sp. (strain YO3AOP1).